The primary structure comprises 383 residues: Probable transcriptional repressor C1348.12 (383 aa).

A DNA-binding region (zn(2)-C6 fungal-type) is located at residues 34–60 (CVICRSKKQKCDGQLPCLYCKKYEYQC).

It is found in the nucleus. Probable transcriptional repressor of multidrug resistance genes. In Schizosaccharomyces pombe (strain 972 / ATCC 24843) (Fission yeast), this protein is Probable transcriptional repressor C1348.12.